We begin with the raw amino-acid sequence, 360 residues long: Chorismate synthase (360 aa).

Arginine 48 and arginine 54 together coordinate NADP(+). FMN is bound by residues 125–127 (RSS), 246–247 (NA), glycine 286, 301–305 (KPTSS), and arginine 327.

The protein belongs to the chorismate synthase family. In terms of assembly, homotetramer. Requires FMNH2 as cofactor.

The enzyme catalyses 5-O-(1-carboxyvinyl)-3-phosphoshikimate = chorismate + phosphate. The protein operates within metabolic intermediate biosynthesis; chorismate biosynthesis; chorismate from D-erythrose 4-phosphate and phosphoenolpyruvate: step 7/7. Functionally, catalyzes the anti-1,4-elimination of the C-3 phosphate and the C-6 proR hydrogen from 5-enolpyruvylshikimate-3-phosphate (EPSP) to yield chorismate, which is the branch point compound that serves as the starting substrate for the three terminal pathways of aromatic amino acid biosynthesis. This reaction introduces a second double bond into the aromatic ring system. The polypeptide is Chorismate synthase (Actinobacillus pleuropneumoniae serotype 7 (strain AP76)).